Reading from the N-terminus, the 295-residue chain is Protease HtpX homolog (295 aa).

A run of 2 helical transmembrane segments spans residues 6–26 and 40–60; these read IGLF…VTSV and LSSL…VSLL. H148 lines the Zn(2+) pocket. E149 is an active-site residue. H152 provides a ligand contact to Zn(2+). 2 helical membrane-spanning segments follow: residues 163 to 183 and 198 to 218; these read LIQG…SYAL and ISNI…VAYF. A Zn(2+)-binding site is contributed by E223.

This sequence belongs to the peptidase M48B family. Requires Zn(2+) as cofactor.

It localises to the cell inner membrane. This is Protease HtpX homolog from Leptospira borgpetersenii serovar Hardjo-bovis (strain JB197).